A 299-amino-acid chain; its full sequence is Methionyl-tRNA formyltransferase (299 aa).

Residue 109–112 participates in (6S)-5,6,7,8-tetrahydrofolate binding; the sequence is SLLP.

It belongs to the Fmt family.

It catalyses the reaction L-methionyl-tRNA(fMet) + (6R)-10-formyltetrahydrofolate = N-formyl-L-methionyl-tRNA(fMet) + (6S)-5,6,7,8-tetrahydrofolate + H(+). Functionally, attaches a formyl group to the free amino group of methionyl-tRNA(fMet). The formyl group appears to play a dual role in the initiator identity of N-formylmethionyl-tRNA by promoting its recognition by IF2 and preventing the misappropriation of this tRNA by the elongation apparatus. The protein is Methionyl-tRNA formyltransferase of Dinoroseobacter shibae (strain DSM 16493 / NCIMB 14021 / DFL 12).